Consider the following 230-residue polypeptide: Heptaprenylglyceryl phosphate synthase (230 aa).

Residue Lys-12 participates in sn-glycerol 1-phosphate binding. Mg(2+) is bound by residues Asp-14 and Thr-40. Residues 159–164 (YIEYSG), Gly-189, and 209–210 (GD) each bind sn-glycerol 1-phosphate.

Belongs to the GGGP/HepGP synthase family. Group I subfamily. Homodimer. Requires Mg(2+) as cofactor.

The catalysed reaction is sn-glycerol 1-phosphate + all-trans-heptaprenyl diphosphate = 3-heptaprenyl-sn-glycero-1-phosphate + diphosphate. It functions in the pathway membrane lipid metabolism; glycerophospholipid metabolism. Functionally, prenyltransferase that catalyzes in vivo the transfer of the heptaprenyl moiety of heptaprenyl pyrophosphate (HepPP; 35 carbon atoms) to the C3 hydroxyl of sn-glycerol-1-phosphate (G1P), producing heptaprenylglyceryl phosphate (HepGP). This reaction is an ether-bond-formation step in the biosynthesis of archaea-type G1P-based membrane lipids found in Bacillales. The chain is Heptaprenylglyceryl phosphate synthase from Staphylococcus aureus (strain MRSA252).